Reading from the N-terminus, the 434-residue chain is Zinc finger protein Pegasus (434 aa).

The interval 33–57 (VSSDKEAETLQGAGTDSDQNGLDHP) is disordered. 3 C2H2-type zinc fingers span residues 82-104 (LKCRYCNYASKGTARLIEHIRIH), 110-132 (HRCHLCPFASAYERHLEAHMRSH), and 138-161 (YKCELCSFRCSDRSNLSHHRRRKH). A compositionally biased stretch (polar residues) spans 260–274 (GQLSSLPPDTQNPAS). Positions 260–357 (GQLSSLPPDT…PSTPAPALPA (98 aa)) are disordered. Low complexity predominate over residues 296 to 313 (CASAVSTSVAQSSSPASP). Polar residues predominate over residues 337–349 (RTSTPSISNSQPS). 2 consecutive C2H2-type zinc fingers follow at residues 364-386 (HHCQHCDMYFADNILYTIHMGCH) and 392-419 (FQCNICGCKCKNKYDFACHFARGACCQH).

The protein belongs to the Ikaros C2H2-type zinc-finger protein family. In terms of assembly, probably self-associates.

It is found in the nucleus. Its function is as follows. Transcriptional repressor that binds the core 5'GNNTGTNG-3' DNA consensus sequence. The polypeptide is Zinc finger protein Pegasus (ikzf5) (Xenopus tropicalis (Western clawed frog)).